We begin with the raw amino-acid sequence, 85 residues long: Large ribosomal subunit protein bL27 (85 aa).

The segment at 1 to 20 (MAHKKAGGSTRNGRDSESKR) is disordered.

This sequence belongs to the bacterial ribosomal protein bL27 family.

The sequence is that of Large ribosomal subunit protein bL27 from Azotobacter vinelandii (strain DJ / ATCC BAA-1303).